Reading from the N-terminus, the 101-residue chain is Large ribosomal subunit protein uL23 (101 aa).

It belongs to the universal ribosomal protein uL23 family. In terms of assembly, part of the 50S ribosomal subunit. Contacts protein L29, and trigger factor when it is bound to the ribosome.

Its function is as follows. One of the early assembly proteins it binds 23S rRNA. One of the proteins that surrounds the polypeptide exit tunnel on the outside of the ribosome. Forms the main docking site for trigger factor binding to the ribosome. The chain is Large ribosomal subunit protein uL23 from Paenarthrobacter aurescens (strain TC1).